Consider the following 69-residue polypeptide: Putative membrane protein insertion efficiency factor (69 aa).

Belongs to the UPF0161 family.

It localises to the cell inner membrane. Functionally, could be involved in insertion of integral membrane proteins into the membrane. The sequence is that of Putative membrane protein insertion efficiency factor from Nitrosomonas europaea (strain ATCC 19718 / CIP 103999 / KCTC 2705 / NBRC 14298).